A 343-amino-acid chain; its full sequence is Adenosine kinase (343 aa).

Aspartate 296 is an active-site residue.

The protein belongs to the carbohydrate kinase PfkB family. Requires Mg(2+) as cofactor.

The enzyme catalyses adenosine + ATP = AMP + ADP + H(+). Its pathway is purine metabolism; AMP biosynthesis via salvage pathway; AMP from adenosine: step 1/1. Its function is as follows. ATP dependent phosphorylation of adenosine and other related nucleoside analogs to monophosphate derivatives. Can also act on the cytokinin isopentenyladenosine to produce isopentenyladenosine monophosphate. The chain is Adenosine kinase (ADK) from Physcomitrium patens (Spreading-leaved earth moss).